A 433-amino-acid polypeptide reads, in one-letter code: Enolase (433 aa).

(2R)-2-phosphoglycerate is bound at residue Q167. Residue E209 is the Proton donor of the active site. Residues D246, E291, and D318 each contribute to the Mg(2+) site. The (2R)-2-phosphoglycerate site is built by K343, R372, S373, and K394. The Proton acceptor role is filled by K343.

The protein belongs to the enolase family. In terms of assembly, component of the RNA degradosome, a multiprotein complex involved in RNA processing and mRNA degradation. Requires Mg(2+) as cofactor.

The protein resides in the cytoplasm. It localises to the secreted. The protein localises to the cell surface. The enzyme catalyses (2R)-2-phosphoglycerate = phosphoenolpyruvate + H2O. It functions in the pathway carbohydrate degradation; glycolysis; pyruvate from D-glyceraldehyde 3-phosphate: step 4/5. Its function is as follows. Catalyzes the reversible conversion of 2-phosphoglycerate (2-PG) into phosphoenolpyruvate (PEP). It is essential for the degradation of carbohydrates via glycolysis. The chain is Enolase from Sodalis glossinidius (strain morsitans).